The chain runs to 274 residues: Small ribosomal subunit biogenesis GTPase RsgA (274 aa).

The CP-type G domain occupies 58-215; sequence KNYLNRPKVA…LVDSPGFSIY (158 aa). GTP-binding positions include 108–111 and 158–166; these read SKLD and GHSGVGKST. Cys238, Cys243, His245, and Cys252 together coordinate Zn(2+).

It belongs to the TRAFAC class YlqF/YawG GTPase family. RsgA subfamily. As to quaternary structure, monomer. Associates with 30S ribosomal subunit, binds 16S rRNA. Zn(2+) is required as a cofactor.

It is found in the cytoplasm. Functionally, one of several proteins that assist in the late maturation steps of the functional core of the 30S ribosomal subunit. Helps release RbfA from mature subunits. May play a role in the assembly of ribosomal proteins into the subunit. Circularly permuted GTPase that catalyzes slow GTP hydrolysis, GTPase activity is stimulated by the 30S ribosomal subunit. This is Small ribosomal subunit biogenesis GTPase RsgA from Mycoplasmoides gallisepticum (strain R(low / passage 15 / clone 2)) (Mycoplasma gallisepticum).